The primary structure comprises 279 residues: Tryptophan synthase alpha chain (279 aa).

Residues Glu-50 and Asp-61 each act as proton acceptor in the active site.

Belongs to the TrpA family. Tetramer of two alpha and two beta chains.

The catalysed reaction is (1S,2R)-1-C-(indol-3-yl)glycerol 3-phosphate + L-serine = D-glyceraldehyde 3-phosphate + L-tryptophan + H2O. Its pathway is amino-acid biosynthesis; L-tryptophan biosynthesis; L-tryptophan from chorismate: step 5/5. In terms of biological role, the alpha subunit is responsible for the aldol cleavage of indoleglycerol phosphate to indole and glyceraldehyde 3-phosphate. The chain is Tryptophan synthase alpha chain from Methylobacterium radiotolerans (strain ATCC 27329 / DSM 1819 / JCM 2831 / NBRC 15690 / NCIMB 10815 / 0-1).